Here is a 345-residue protein sequence, read N- to C-terminus: Glycerol-3-phosphate dehydrogenase [NAD(P)+] (345 aa).

NADPH-binding residues include Ser-23, Tyr-24, His-44, and Lys-118. Positions 118, 147, and 149 each coordinate sn-glycerol 3-phosphate. Residue Ala-151 participates in NADPH binding. Sn-glycerol 3-phosphate contacts are provided by Lys-203, Asp-256, Ser-266, Arg-267, and Asn-268. Catalysis depends on Lys-203, which acts as the Proton acceptor. Arg-267 serves as a coordination point for NADPH. NADPH-binding residues include Val-291 and Glu-293.

This sequence belongs to the NAD-dependent glycerol-3-phosphate dehydrogenase family.

It localises to the cytoplasm. The catalysed reaction is sn-glycerol 3-phosphate + NAD(+) = dihydroxyacetone phosphate + NADH + H(+). The enzyme catalyses sn-glycerol 3-phosphate + NADP(+) = dihydroxyacetone phosphate + NADPH + H(+). The protein operates within membrane lipid metabolism; glycerophospholipid metabolism. Functionally, catalyzes the reduction of the glycolytic intermediate dihydroxyacetone phosphate (DHAP) to sn-glycerol 3-phosphate (G3P), the key precursor for phospholipid synthesis. The polypeptide is Glycerol-3-phosphate dehydrogenase [NAD(P)+] (Vibrio vulnificus (strain CMCP6)).